Reading from the N-terminus, the 305-residue chain is GTPase Era (305 aa).

In terms of domain architecture, Era-type G spans 9 to 176; that stretch reads KSGFISIIGR…LDTLPKYLPE (168 aa). The tract at residues 17-24 is G1; the sequence is GRPNVGKS. 17–24 lines the GTP pocket; it reads GRPNVGKS. The segment at 43 to 47 is G2; it reads QTTRN. A G3 region spans residues 64–67; that stretch reads DTPG. Residues 64–68 and 126–129 contribute to the GTP site; these read DTPGI and NKID. Residues 126–129 are G4; the sequence is NKID. The segment at 155–157 is G5; the sequence is ISA. Residues 207–286 enclose the KH type-2 domain; the sequence is TREEIPHSIA…YLELWVKVQK (80 aa).

This sequence belongs to the TRAFAC class TrmE-Era-EngA-EngB-Septin-like GTPase superfamily. Era GTPase family. In terms of assembly, monomer.

The protein resides in the cytoplasm. The protein localises to the cell membrane. Its function is as follows. An essential GTPase that binds both GDP and GTP, with rapid nucleotide exchange. Plays a role in 16S rRNA processing and 30S ribosomal subunit biogenesis and possibly also in cell cycle regulation and energy metabolism. In Lysinibacillus sphaericus (strain C3-41), this protein is GTPase Era.